The primary structure comprises 369 residues: DNA replication and repair protein RecF (369 aa).

G30–T37 contributes to the ATP binding site.

Belongs to the RecF family.

The protein localises to the cytoplasm. Its function is as follows. The RecF protein is involved in DNA metabolism; it is required for DNA replication and normal SOS inducibility. RecF binds preferentially to single-stranded, linear DNA. It also seems to bind ATP. In Chlorobium luteolum (strain DSM 273 / BCRC 81028 / 2530) (Pelodictyon luteolum), this protein is DNA replication and repair protein RecF.